Here is a 204-residue protein sequence, read N- to C-terminus: Movement protein TGB2 (204 aa).

At 1–11 (MKTTVGSRPNK) the chain is on the cytoplasmic side. Residues 12-32 (YWPIVAGIGVVGLFAYLIFSN) form a helical membrane-spanning segment. The Lumenal segment spans residues 33–72 (QKHSTESGDNIHKFANGGSYRDGSKSISYNRNHPFAYGNA). The helical transmembrane segment at 73 to 93 (SSPGMLLPAMLTIIGIISYLW) threads the bilayer. Topologically, residues 94-204 (RTRDSVLGDS…RFNQCFEYSS (111 aa)) are cytoplasmic.

The protein belongs to the virgaviridae/benyvirus TGB2 movement protein family. As to quaternary structure, interacts with movement protein TGB3. TGB1-TGB3-TGB2 complex formation is enhanced by ATP hydrolysis.

Its subcellular location is the host cell junction. The protein localises to the host plasmodesma. It is found in the host endoplasmic reticulum membrane. It localises to the host cytoplasm. The protein resides in the host cytoskeleton. Its function is as follows. Participates in the transport of viral genome to neighboring plant cells directly through plasmodesmata, without any budding. TGBp2 and TGBp3 are necessary for intracellular delivery of TGBp1-containing vRNPs to plasmodesmata. Can gate plasmodesmata and increase their size exclusion limit. To a lesser extent than TGB3, induces host actin cytoskeleton network thickening, which probably plays a major role in virus cell-to-cell movement. The chain is Movement protein TGB2 from Barley stripe mosaic virus (BSMV).